Consider the following 203-residue polypeptide: ATP-dependent Clp protease proteolytic subunit 1 (203 aa).

S101 serves as the catalytic Nucleophile. The active site involves H126.

The protein belongs to the peptidase S14 family. Fourteen ClpP subunits assemble into 2 heptameric rings which stack back to back to give a disk-like structure with a central cavity, resembling the structure of eukaryotic proteasomes.

The protein resides in the cytoplasm. It carries out the reaction Hydrolysis of proteins to small peptides in the presence of ATP and magnesium. alpha-casein is the usual test substrate. In the absence of ATP, only oligopeptides shorter than five residues are hydrolyzed (such as succinyl-Leu-Tyr-|-NHMec, and Leu-Tyr-Leu-|-Tyr-Trp, in which cleavage of the -Tyr-|-Leu- and -Tyr-|-Trp bonds also occurs).. In terms of biological role, cleaves peptides in various proteins in a process that requires ATP hydrolysis. Has a chymotrypsin-like activity. Plays a major role in the degradation of misfolded proteins. This Synechococcus sp. (strain JA-3-3Ab) (Cyanobacteria bacterium Yellowstone A-Prime) protein is ATP-dependent Clp protease proteolytic subunit 1.